The following is a 272-amino-acid chain: Low-density lipoprotein receptor class A domain-containing protein 2 (272 aa).

Positions 1 to 25 (MEACCLLQLPQRLLLLGAAALTATA) are cleaved as a signal peptide. Topologically, residues 26–233 (LETADLAELC…GSTDAHTSRS (208 aa)) are extracellular. An N-linked (GlcNAc...) asparagine glycan is attached at asparagine 97. Residues 172 to 214 (PCGAYFRCQNGRCIPSSLVCDPWGMDNCGDGSDQGSWSPADCR) enclose the LDL-receptor class A domain. Intrachain disulfides connect cysteine 173-cysteine 184, cysteine 179-cysteine 199, and cysteine 191-cysteine 213. Positions 202–272 (GSDQGSWSPA…QDAALEGSTE (71 aa)) are disordered. Over residues 220 to 236 (PSQTGSTDAHTSRSLTP) the composition is skewed to polar residues. A helical membrane pass occupies residues 234–250 (LTPSPALGSAGSLWIAA). Over 251 to 272 (ERSSPAGRDPTRQDAALEGSTE) the chain is Cytoplasmic.

Belongs to the LDLR family.

It localises to the membrane. The polypeptide is Low-density lipoprotein receptor class A domain-containing protein 2 (LDLRAD2) (Homo sapiens (Human)).